The primary structure comprises 273 residues: Undecaprenyl-diphosphatase (273 aa).

7 helical membrane-spanning segments follow: residues 6–26 (SLLI…LPVS), 45–65 (AKTF…VMFW), 90–110 (LTLI…LLFH), 116–136 (LFNP…LIAA), 190–210 (YAAS…ATAL), 222–242 (GDIP…LIAI), and 252–272 (ISFI…YVVF).

Belongs to the UppP family.

The protein localises to the cell inner membrane. It catalyses the reaction di-trans,octa-cis-undecaprenyl diphosphate + H2O = di-trans,octa-cis-undecaprenyl phosphate + phosphate + H(+). Functionally, catalyzes the dephosphorylation of undecaprenyl diphosphate (UPP). Confers resistance to bacitracin. This chain is Undecaprenyl-diphosphatase, found in Escherichia coli O139:H28 (strain E24377A / ETEC).